Consider the following 663-residue polypeptide: Alcohol oxidase 1 (663 aa).

An FAD-binding site is contributed by 8-38; that stretch reads DILVLGGGSSGSCIAGRLANLDHSLKVGLIE. Histidine 567 (proton acceptor) is an active-site residue. The short motif at 661–663 is the Microbody targeting signal element; the sequence is ARF.

The protein belongs to the GMC oxidoreductase family. Homooctamer. Requires FAD as cofactor.

Its subcellular location is the peroxisome matrix. It catalyses the reaction a primary alcohol + O2 = an aldehyde + H2O2. Its pathway is energy metabolism; methane degradation. Major isoform of alcohol oxidase, which catalyzes the oxidation of methanol to formaldehyde and hydrogen peroxide, the first step in the methanol utilization pathway of methylotrophic yeasts. The chain is Alcohol oxidase 1 (AOX1) from Komagataella phaffii (strain ATCC 76273 / CBS 7435 / CECT 11047 / NRRL Y-11430 / Wegner 21-1) (Yeast).